The following is a 195-amino-acid chain: MILMITQHPLILASASPRRTELLRQIGVPHTIRPADVLEEAPYPMTADEYVMYLSRKKARAVAKPGEIVLAADTVVALDQQILEKPADQPAALEMFRLLSGRTHEVVTGVTLLQDEREETFTVTTTVRFCEIPESWMLSYAATDEPYDKAGGYGIQGKGGLFVEAIDGDYYNVVGLPINPISRRLEAFGIEPMFA.

D73 functions as the Proton acceptor in the catalytic mechanism.

This sequence belongs to the Maf family. YhdE subfamily. Requires a divalent metal cation as cofactor.

The protein localises to the cytoplasm. It carries out the reaction dTTP + H2O = dTMP + diphosphate + H(+). The enzyme catalyses UTP + H2O = UMP + diphosphate + H(+). Nucleoside triphosphate pyrophosphatase that hydrolyzes dTTP and UTP. May have a dual role in cell division arrest and in preventing the incorporation of modified nucleotides into cellular nucleic acids. The protein is dTTP/UTP pyrophosphatase of Exiguobacterium sibiricum (strain DSM 17290 / CCUG 55495 / CIP 109462 / JCM 13490 / 255-15).